A 150-amino-acid polypeptide reads, in one-letter code: Large ribosomal subunit protein bL9 (150 aa).

This sequence belongs to the bacterial ribosomal protein bL9 family.

In terms of biological role, binds to the 23S rRNA. The protein is Large ribosomal subunit protein bL9 of Vibrio parahaemolyticus serotype O3:K6 (strain RIMD 2210633).